The following is a 500-amino-acid chain: Protein nucleotidyltransferase YdiU (500 aa).

Glycine 96, glycine 98, arginine 99, lysine 119, aspartate 131, glycine 132, arginine 182, and arginine 189 together coordinate ATP. The active-site Proton acceptor is the aspartate 258. Residues asparagine 259 and aspartate 268 each contribute to the Mg(2+) site. Aspartate 268 contacts ATP.

Belongs to the SELO family. Mg(2+) serves as cofactor. Mn(2+) is required as a cofactor.

The catalysed reaction is L-seryl-[protein] + ATP = 3-O-(5'-adenylyl)-L-seryl-[protein] + diphosphate. It catalyses the reaction L-threonyl-[protein] + ATP = 3-O-(5'-adenylyl)-L-threonyl-[protein] + diphosphate. It carries out the reaction L-tyrosyl-[protein] + ATP = O-(5'-adenylyl)-L-tyrosyl-[protein] + diphosphate. The enzyme catalyses L-histidyl-[protein] + UTP = N(tele)-(5'-uridylyl)-L-histidyl-[protein] + diphosphate. The catalysed reaction is L-seryl-[protein] + UTP = O-(5'-uridylyl)-L-seryl-[protein] + diphosphate. It catalyses the reaction L-tyrosyl-[protein] + UTP = O-(5'-uridylyl)-L-tyrosyl-[protein] + diphosphate. Functionally, nucleotidyltransferase involved in the post-translational modification of proteins. It can catalyze the addition of adenosine monophosphate (AMP) or uridine monophosphate (UMP) to a protein, resulting in modifications known as AMPylation and UMPylation. This chain is Protein nucleotidyltransferase YdiU, found in Rhizobium etli (strain CIAT 652).